Here is a 287-residue protein sequence, read N- to C-terminus: Putative B3 domain-containing protein Os08g0157700 (287 aa).

Residues A17–Q29 are compositionally biased toward acidic residues. The segment at A17 to A36 is disordered. A DNA-binding region (TF-B3) is located at residues F71–H168.

Its subcellular location is the nucleus. The protein is Putative B3 domain-containing protein Os08g0157700 of Oryza sativa subsp. japonica (Rice).